The chain runs to 117 residues: Large ribosomal subunit protein uL18 (117 aa).

It belongs to the universal ribosomal protein uL18 family. Part of the 50S ribosomal subunit; part of the 5S rRNA/L5/L18/L25 subcomplex. Contacts the 5S and 23S rRNAs.

Functionally, this is one of the proteins that bind and probably mediate the attachment of the 5S RNA into the large ribosomal subunit, where it forms part of the central protuberance. This chain is Large ribosomal subunit protein uL18, found in Sodalis glossinidius (strain morsitans).